A 226-amino-acid polypeptide reads, in one-letter code: Uridylate kinase (226 aa).

K9–K13 serves as a coordination point for ATP. Residue G46 participates in UMP binding. Residues G47 and R51 each coordinate ATP. Residues D68 and F116–T122 contribute to the UMP site. T142, Y148, and D151 together coordinate ATP.

The protein belongs to the UMP kinase family. In terms of assembly, homohexamer.

The protein resides in the cytoplasm. The catalysed reaction is UMP + ATP = UDP + ADP. The protein operates within pyrimidine metabolism; CTP biosynthesis via de novo pathway; UDP from UMP (UMPK route): step 1/1. Its activity is regulated as follows. Inhibited by UTP. Functionally, catalyzes the reversible phosphorylation of UMP to UDP. In Hyperthermus butylicus (strain DSM 5456 / JCM 9403 / PLM1-5), this protein is Uridylate kinase.